The chain runs to 451 residues: Bifunctional protein GlmU (451 aa).

Residues 1–225 form a pyrophosphorylase region; the sequence is MSLAVVILAA…EFEIQGVNDR (225 aa). Residues 8–11, lysine 22, glutamine 73, 78–79, 99–101, glycine 135, glutamate 150, asparagine 165, and asparagine 223 contribute to the UDP-N-acetyl-alpha-D-glucosamine site; these read LAAG, GT, and YGD. A Mg(2+)-binding site is contributed by aspartate 101. Asparagine 223 serves as a coordination point for Mg(2+). A linker region spans residues 226–246; the sequence is IQLAQLEREWQKHIAEVIMSK. The interval 247 to 451 is N-acetyltransferase; the sequence is GVSVADPSRI…IDTWQRPVKK (205 aa). The UDP-N-acetyl-alpha-D-glucosamine site is built by arginine 329 and lysine 347. Histidine 359 acts as the Proton acceptor in catalysis. Tyrosine 362 and asparagine 373 together coordinate UDP-N-acetyl-alpha-D-glucosamine. Acetyl-CoA-binding positions include alanine 376, 382-383, serine 401, alanine 419, and arginine 436; that span reads NY.

It in the N-terminal section; belongs to the N-acetylglucosamine-1-phosphate uridyltransferase family. This sequence in the C-terminal section; belongs to the transferase hexapeptide repeat family. As to quaternary structure, homotrimer. Mg(2+) serves as cofactor.

The protein localises to the cytoplasm. It carries out the reaction alpha-D-glucosamine 1-phosphate + acetyl-CoA = N-acetyl-alpha-D-glucosamine 1-phosphate + CoA + H(+). It catalyses the reaction N-acetyl-alpha-D-glucosamine 1-phosphate + UTP + H(+) = UDP-N-acetyl-alpha-D-glucosamine + diphosphate. The protein operates within nucleotide-sugar biosynthesis; UDP-N-acetyl-alpha-D-glucosamine biosynthesis; N-acetyl-alpha-D-glucosamine 1-phosphate from alpha-D-glucosamine 6-phosphate (route II): step 2/2. Its pathway is nucleotide-sugar biosynthesis; UDP-N-acetyl-alpha-D-glucosamine biosynthesis; UDP-N-acetyl-alpha-D-glucosamine from N-acetyl-alpha-D-glucosamine 1-phosphate: step 1/1. It functions in the pathway bacterial outer membrane biogenesis; LPS lipid A biosynthesis. In terms of biological role, catalyzes the last two sequential reactions in the de novo biosynthetic pathway for UDP-N-acetylglucosamine (UDP-GlcNAc). The C-terminal domain catalyzes the transfer of acetyl group from acetyl coenzyme A to glucosamine-1-phosphate (GlcN-1-P) to produce N-acetylglucosamine-1-phosphate (GlcNAc-1-P), which is converted into UDP-GlcNAc by the transfer of uridine 5-monophosphate (from uridine 5-triphosphate), a reaction catalyzed by the N-terminal domain. This Francisella philomiragia subsp. philomiragia (strain ATCC 25017 / CCUG 19701 / FSC 153 / O#319-036) protein is Bifunctional protein GlmU.